Consider the following 358-residue polypeptide: Thiol protease aleurain (358 aa).

An N-terminal signal peptide occupies residues 1-21; sequence MSAKTILSSVVLVVLVAASAA. The tract at residues 22-42 is interaction with VSR1; the sequence is ANIGFDESNPIRMVSDGLREV. Positions 22–140 are cleaved as a propeptide — activation peptide; sequence ANIGFDESNP…KGSHKVTEAA (119 aa). A glycan (N-linked (GlcNAc...) asparagine) is linked at Asn125. Intrachain disulfides connect Cys162/Cys205 and Cys196/Cys238. Cys165 is an active-site residue. N-linked (GlcNAc...) asparagine glycosylation occurs at Asn254. Cys296 and Cys346 are oxidised to a cystine. Catalysis depends on residues His305 and Asn325.

It belongs to the peptidase C1 family. As to quaternary structure, interacts with VSR1/BP80B. Expressed in leaves (at protein level).

The protein localises to the vacuole. The catalysed reaction is Hydrolysis of proteins, acting as an aminopeptidase (notably, cleaving Arg-|-Xaa bonds) as well as an endopeptidase.. Its function is as follows. May play a role in proteolysis leading to mobilization of nitrogen during senescence and starvation. In Arabidopsis thaliana (Mouse-ear cress), this protein is Thiol protease aleurain.